The sequence spans 118 residues: Small ribosomal subunit protein uS13 (118 aa).

The interval Gly94 to Lys118 is disordered.

Belongs to the universal ribosomal protein uS13 family. In terms of assembly, part of the 30S ribosomal subunit. Forms a loose heterodimer with protein S19. Forms two bridges to the 50S subunit in the 70S ribosome.

In terms of biological role, located at the top of the head of the 30S subunit, it contacts several helices of the 16S rRNA. In the 70S ribosome it contacts the 23S rRNA (bridge B1a) and protein L5 of the 50S subunit (bridge B1b), connecting the 2 subunits; these bridges are implicated in subunit movement. Contacts the tRNAs in the A and P-sites. This is Small ribosomal subunit protein uS13 from Pseudomonas aeruginosa (strain LESB58).